The sequence spans 429 residues: Glutamate-1-semialdehyde 2,1-aminomutase 1 (429 aa).

Lysine 267 carries the post-translational modification N6-(pyridoxal phosphate)lysine.

This sequence belongs to the class-III pyridoxal-phosphate-dependent aminotransferase family. HemL subfamily. As to quaternary structure, homodimer. The cofactor is pyridoxal 5'-phosphate.

Its subcellular location is the cytoplasm. The enzyme catalyses (S)-4-amino-5-oxopentanoate = 5-aminolevulinate. Its pathway is porphyrin-containing compound metabolism; protoporphyrin-IX biosynthesis; 5-aminolevulinate from L-glutamyl-tRNA(Glu): step 2/2. In Staphylococcus carnosus (strain TM300), this protein is Glutamate-1-semialdehyde 2,1-aminomutase 1.